Consider the following 691-residue polypeptide: Germ cell nuclear acidic protein (691 aa).

The SUMO interaction motif 1 (SIM) motif lies at 22-25 (ILNV). Residues 25–488 (VQSSSDDTSG…GAAKVEKRKT (464 aa)) form a disordered region. Over residues 27–36 (SSSDDTSGSS) the composition is skewed to low complexity. Positions 48–63 (CILNVQSRSGDTSGSS) are enriched in polar residues. 3 consecutive short sequence motifs (SUMO interaction motif 1 (SIM)) follow at residues 76-79 (VVVI), 97-100 (LLEI), and 121-124 (IVIS). Residues 86 to 97 (ECHTHEEKKAKL) show a composition bias toward basic and acidic residues. A compositionally biased stretch (acidic residues) spans 124–333 (SDDDNDDDNG…VPDDNSDDLE (210 aa)). Basic residues predominate over residues 467-488 (GHKKRGPSKKKPGAAKVEKRKT). Residues 522–677 (VQRIYDLFNR…AKCKGSLVMV (156 aa)) enclose the SprT-like domain.

It belongs to the serine-aspartate repeat-containing protein (SDr) family. In terms of assembly, interacts (via SIM domains) with SUMO2; this interaction allows the GCNA recruitment to DPCs sites. Interacts with TOP2A; this interaction allows the resolution of topoisomerase II (TOP2A) DNA-protein cross-links. In terms of tissue distribution, expressed in germ cells of the testis (at protein level). Detected in skeletal muscle, liver, kidney, pancreas, heart, lung and brain. Expressed throughout spermatogenesis, from spermatogonia to elongated spermatids, in normal adult testis (at protein level).

The protein localises to the nucleus. Its subcellular location is the PML body. The protein resides in the chromosome. Functionally, may play a role in DNA-protein cross-links (DPCs) clearance through a SUMO-dependent recruitment to sites of DPCs, ensuring the genomic stability by protecting germ cells and early embryos from various sources of damage. Can resolve the topoisomerase II (TOP2A) DPCs. In Homo sapiens (Human), this protein is Germ cell nuclear acidic protein.